The sequence spans 113 residues: Protein translation factor SUI1 homolog (113 aa).

The protein belongs to the SUI1 family.

Probably involved in translation. The chain is Protein translation factor SUI1 homolog from Spuriopimpinella brachycarpa (Chamnamul).